A 507-amino-acid polypeptide reads, in one-letter code: Heat shock 70 kDa protein 14-B (507 aa).

Belongs to the heat shock protein 70 family. As to quaternary structure, component of ribosome-associated complex (RAC).

It is found in the cytoplasm. Its subcellular location is the cytosol. Its function is as follows. Component of the ribosome-associated complex (RAC), a complex involved in folding or maintaining nascent polypeptides in a folding-competent state. The polypeptide is Heat shock 70 kDa protein 14-B (hspa14-b) (Xenopus laevis (African clawed frog)).